A 1023-amino-acid chain; its full sequence is uncharacterized protein (1023 aa).

Residues 1 to 35 (MAEKRPLGPLGPMMYGKLPRLEPDPGPGHSLPLSA) form a disordered region. Lys-17 is subject to N6-acetyllysine. Phosphoserine occurs at positions 206 and 383. Disordered regions lie at residues 381-501 (GASP…PVID), 518-551 (PEPRAERDSAPATSKSQDKDCKGNLPAQDGASRS), 703-742 (PAPASAPPPSPAPAPAPASGPAPSSAQVPTAAPVDSPEQH), 907-980 (EART…TLRA), and 1002-1023 (KASGADRSSPHPQLLGSQTHHL). Phosphothreonine is present on Thr-389. Polar residues predominate over residues 391 to 400 (PSHSQNSVQP). 3 stretches are compositionally biased toward basic and acidic residues: residues 425-436 (RPAEKPTPEAQE), 443-454 (CRKEQLQPRPNE), and 477-490 (CAKERQSVPQKDAR). 2 positions are modified to phosphoserine: Ser-493 and Ser-494. Over residues 706–722 (ASAPPPSPAPAPAPASG) the composition is skewed to pro residues. Phosphoserine is present on residues Ser-912, Ser-964, and Ser-972. Low complexity predominate over residues 963–972 (PSPSSGASTS).

This is an uncharacterized protein from Mus musculus (Mouse).